Consider the following 108-residue polypeptide: UPF0060 membrane protein Mfla_0485 (108 aa).

4 helical membrane-spanning segments follow: residues 7–27 (FSLFILTALAEILGCYLPYLW), 33–53 (SVWLLLPAAISLAVFAWLLSL), 63–83 (AAYGGVYIFVALGWLWLVDGI), and 87–107 (TWDFVGVGVALAGMAIIMFAP).

It belongs to the UPF0060 family.

It localises to the cell inner membrane. This chain is UPF0060 membrane protein Mfla_0485, found in Methylobacillus flagellatus (strain ATCC 51484 / DSM 6875 / VKM B-1610 / KT).